Consider the following 1309-residue polypeptide: Clustered mitochondria protein homolog (1309 aa).

Residues methionine 1–glutamate 34 are disordered. Residues glutamate 9–glycine 25 show a composition bias toward basic and acidic residues. A phosphoserine mark is found at serine 279 and serine 281. Positions arginine 335–leucine 577 constitute a Clu domain. A compositionally biased stretch (polar residues) spans leucine 636–glutamate 651. Positions leucine 636–leucine 674 are disordered. Phosphoserine is present on residues serine 654, serine 664, and serine 723. 4 TPR repeats span residues alanine 978–valine 1011, cysteine 1020–valine 1053, alanine 1104–tyrosine 1137, and alanine 1146–glutamine 1179. Residues histidine 1264–glutamate 1278 show a composition bias toward basic and acidic residues. Positions histidine 1264–glycine 1309 are disordered. Residues proline 1279 to proline 1290 show a composition bias toward low complexity.

Belongs to the CLU family.

The protein localises to the cytoplasm. The protein resides in the cytoplasmic granule. In terms of biological role, mRNA-binding protein involved in proper cytoplasmic distribution of mitochondria. Specifically binds mRNAs of nuclear-encoded mitochondrial proteins in the cytoplasm and regulates transport or translation of these transcripts close to mitochondria, playing a role in mitochondrial biogenesis. The polypeptide is Clustered mitochondria protein homolog (CLUH) (Homo sapiens (Human)).